Reading from the N-terminus, the 38-residue chain is Defensin D7 (38 aa).

The protein belongs to the DEFL family. Group IV subfamily. In terms of tissue distribution, distributed in the epidermal cell layer of leaves and in the subepidermal layer region of stems. Not in roots.

Its subcellular location is the secreted. The protein localises to the cell wall. Its function is as follows. Antimicrobial peptide. Active against Fusarium spp., Gram-positive and Gram-negative bacterial pathogens. The chain is Defensin D7 from Spinacia oleracea (Spinach).